The chain runs to 261 residues: Triosephosphate isomerase (261 aa).

10–12 contributes to the substrate binding site; it reads NWK. The Electrophile role is filled by histidine 100. Glutamate 172 (proton acceptor) is an active-site residue. Residues glycine 178, serine 218, and 239–240 each bind substrate; that span reads GG.

The protein belongs to the triosephosphate isomerase family. As to quaternary structure, homodimer.

The protein localises to the cytoplasm. It catalyses the reaction D-glyceraldehyde 3-phosphate = dihydroxyacetone phosphate. It participates in carbohydrate biosynthesis; gluconeogenesis. Its pathway is carbohydrate degradation; glycolysis; D-glyceraldehyde 3-phosphate from glycerone phosphate: step 1/1. In terms of biological role, involved in the gluconeogenesis. Catalyzes stereospecifically the conversion of dihydroxyacetone phosphate (DHAP) to D-glyceraldehyde-3-phosphate (G3P). This Mycolicibacterium paratuberculosis (strain ATCC BAA-968 / K-10) (Mycobacterium paratuberculosis) protein is Triosephosphate isomerase.